The following is a 345-amino-acid chain: Myb/SANT-like DNA-binding domain-containing protein 4 (345 aa).

The 74-residue stretch at 4–77 (LKRKRKSNFS…EVKRRYLDWR (74 aa)) folds into the Myb-like domain. Lys9 is covalently cross-linked (Glycyl lysine isopeptide (Lys-Gly) (interchain with G-Cter in SUMO2)). Phosphoserine is present on Ser106. Glycyl lysine isopeptide (Lys-Gly) (interchain with G-Cter in SUMO2) cross-links involve residues Lys114 and Lys142. A disordered region spans residues 141–160 (VKVEEEERDPQSPEFEIEEE). Thr188 is modified (phosphothreonine). A coiled-coil region spans residues 203-345 (LLVNIEKQKL…LRIQKEGHLQ (143 aa)). Glycyl lysine isopeptide (Lys-Gly) (interchain with G-Cter in SUMO2) cross-links involve residues Lys237, Lys254, and Lys273.

The polypeptide is Myb/SANT-like DNA-binding domain-containing protein 4 (MSANTD4) (Bos taurus (Bovine)).